The chain runs to 264 residues: Ribosomal RNA small subunit methyltransferase A (264 aa).

S-adenosyl-L-methionine contacts are provided by histidine 15, leucine 17, glycine 42, glutamate 63, aspartate 88, and asparagine 109.

Belongs to the class I-like SAM-binding methyltransferase superfamily. rRNA adenine N(6)-methyltransferase family. RsmA subfamily.

It is found in the cytoplasm. The catalysed reaction is adenosine(1518)/adenosine(1519) in 16S rRNA + 4 S-adenosyl-L-methionine = N(6)-dimethyladenosine(1518)/N(6)-dimethyladenosine(1519) in 16S rRNA + 4 S-adenosyl-L-homocysteine + 4 H(+). Functionally, specifically dimethylates two adjacent adenosines (A1518 and A1519) in the loop of a conserved hairpin near the 3'-end of 16S rRNA in the 30S particle. May play a critical role in biogenesis of 30S subunits. The polypeptide is Ribosomal RNA small subunit methyltransferase A (Nitrosococcus oceani (strain ATCC 19707 / BCRC 17464 / JCM 30415 / NCIMB 11848 / C-107)).